Here is a 138-residue protein sequence, read N- to C-terminus: Small ribosomal subunit protein uS11c (138 aa).

This sequence belongs to the universal ribosomal protein uS11 family. Part of the 30S ribosomal subunit.

The protein resides in the plastid. The protein localises to the chloroplast. The polypeptide is Small ribosomal subunit protein uS11c (Acorus calamus (Sweet flag)).